The sequence spans 268 residues: Indole-3-glycerol phosphate synthase 2 (268 aa).

Belongs to the TrpC family.

It carries out the reaction 1-(2-carboxyphenylamino)-1-deoxy-D-ribulose 5-phosphate + H(+) = (1S,2R)-1-C-(indol-3-yl)glycerol 3-phosphate + CO2 + H2O. Its pathway is amino-acid biosynthesis; L-tryptophan biosynthesis; L-tryptophan from chorismate: step 4/5. The sequence is that of Indole-3-glycerol phosphate synthase 2 (trpC2) from Ralstonia nicotianae (strain ATCC BAA-1114 / GMI1000) (Ralstonia solanacearum).